The primary structure comprises 228 residues: Thymidylate kinase (228 aa).

Over residues 1-10 (MSDSAVQRSS) the composition is skewed to polar residues. The disordered stretch occupies residues 1-23 (MSDSAVQRSSGRGRFITFEGGEG). 20 to 27 (GGEGTGKS) serves as a coordination point for ATP.

The protein belongs to the thymidylate kinase family.

The catalysed reaction is dTMP + ATP = dTDP + ADP. Functionally, phosphorylation of dTMP to form dTDP in both de novo and salvage pathways of dTTP synthesis. This chain is Thymidylate kinase, found in Bradyrhizobium diazoefficiens (strain JCM 10833 / BCRC 13528 / IAM 13628 / NBRC 14792 / USDA 110).